Here is an 81-residue protein sequence, read N- to C-terminus: Thrombin-like enzyme collinein-3 (81 aa).

Residue Asp-4 is part of the active site. A disulfide bridge links Cys-51 with Cys-68.

As to quaternary structure, monomer. In terms of tissue distribution, expressed by the vanom gland.

The protein resides in the secreted. In terms of biological role, thrombin-like snake venom serine protease. This Crotalus durissus collilineatus (Brazilian rattlesnake) protein is Thrombin-like enzyme collinein-3.